Here is a 251-residue protein sequence, read N- to C-terminus: Probable transcriptional regulatory protein RSal33209_2002 (251 aa).

The protein belongs to the TACO1 family.

Its subcellular location is the cytoplasm. In Renibacterium salmoninarum (strain ATCC 33209 / DSM 20767 / JCM 11484 / NBRC 15589 / NCIMB 2235), this protein is Probable transcriptional regulatory protein RSal33209_2002.